Reading from the N-terminus, the 561-residue chain is Transmembrane protein 209 (561 aa).

Ser11 carries the post-translational modification Phosphoserine. A helical transmembrane segment spans residues 28-48 (VVLAWGLLNVSMAGMIYTEMT). Asn57 is a glycosylation site (N-linked (GlcNAc...) asparagine). A helical transmembrane segment spans residues 60 to 80 (YWPLWYIELALASLFSLNALF). Position 98 is a phosphoserine (Ser98). Disordered regions lie at residues 120–156 (LAAT…KFAT) and 200–232 (SSPY…PTDK). Positions 138-152 (SVLSYSPSRSPSTSP) are enriched in low complexity. A phosphoserine mark is found at Ser201 and Ser248. The tract at residues 250 to 270 (EEKQHRVKLGSPDSTSPSTSP) is disordered. Low complexity predominate over residues 260 to 270 (SPDSTSPSTSP). Asn274 is a glycosylation site (N-linked (GlcNAc...) asparagine). Ser278 carries the phosphoserine modification.

In terms of assembly, interacts with NUP205.

Its subcellular location is the membrane. It localises to the nucleus envelope. The protein resides in the golgi apparatus. It is found in the cytoplasm. Nuclear envelope protein which in association with NUP205, may be involved in nuclear transport of various nuclear proteins in addition to MYC. In Mus musculus (Mouse), this protein is Transmembrane protein 209 (Tmem209).